The following is a 187-amino-acid chain: Orotate phosphoribosyltransferase (187 aa).

5-phospho-alpha-D-ribose 1-diphosphate is bound by residues R98, K99, K102, H104, and 128 to 136 (EDVTTTGGS). Residues T132 and R160 each coordinate orotate.

Belongs to the purine/pyrimidine phosphoribosyltransferase family. PyrE subfamily. In terms of assembly, homodimer. Mg(2+) is required as a cofactor.

The catalysed reaction is orotidine 5'-phosphate + diphosphate = orotate + 5-phospho-alpha-D-ribose 1-diphosphate. Its pathway is pyrimidine metabolism; UMP biosynthesis via de novo pathway; UMP from orotate: step 1/2. Functionally, catalyzes the transfer of a ribosyl phosphate group from 5-phosphoribose 1-diphosphate to orotate, leading to the formation of orotidine monophosphate (OMP). The polypeptide is Orotate phosphoribosyltransferase (Rhodopseudomonas palustris (strain BisB18)).